Here is an 869-residue protein sequence, read N- to C-terminus: MSSCKTTLSEMVGSVTKDRGTINVKARTRSSNVTFKPPVTHDMVRSLFDPTLKKSLLEKCIALAIISNFFICYWVFQRFGLQFTKYFFLVQYLFWRIAYNLGIGLVLHYQSHYETLTNCAKTHAIFSKIPHNKDANSNFSTNSNSFSEKFWNFIRKFCQYEIRSKMPKEYDLFAYPEEINVWLIFRQFVDLILMQDFVTYIIYVYLSIPYSWVQIFNWRSLLGVILILFNIWVKLDAHRVVKDYAWYWGDFFFLEESELIFDGVFNISPHPMYSIGYLGYYGLSLICNDYKVLLVSVFGHYSQFLFLKYVENPHIERTYGDGTDSDSQMNSRIDDLISKENYDYSRPLINMGLSFNNFNKLRFTDYFTIGTVAALMLGAIMNARFINLNYLFITVFVTKLVSWLFISTILYKQSQSKWFTRLFLENGYTQVYSYEQWQFIYNYYLVLTYTLMIIYTGLQIWSNFSNINNSQLIFGLILVALQTWCDKETRLAISDFGWFYGDFFLSNYISTRKLTSQGIYRYLNHPEAVLGVVGVWGTVLMTNFAVTNIILAVLWTLTNFILVKFIETPHVNKIYGKTKRVSGVGKTLLGLKPLRQVSDIVNRIENIIIKSLVDESKNSNGGAELLPKNYQDNKEWNILIQEAMDSVATRLSPYCELKIENEQIETNFVLPTPVTLNWKMPIELYNGDDWIGLYKVIDTRADREKTRVGSGGHWSATSKDSYMNHGLRHKESVTEIKATEKYVQGKVTFDTSLLYFENGIYEFRYHSGNSHKVLLISTPFEISLPVLNTTTPELFEKDLTEFLTKVNVLKDGKFRPLGNKFFGMDSLKQLIKNSIGVELSSEYMRRVNGDAHIISHRAWDIKQTLDSLA.

At S2 the chain carries N-acetylserine. Topologically, residues 2-55 (SSCKTTLSEMVGSVTKDRGTINVKARTRSSNVTFKPPVTHDMVRSLFDPTLKKS) are lumenal. The chain crosses the membrane as a helical span at residues 56–76 (LLEKCIALAIISNFFICYWVF). Over 77-86 (QRFGLQFTKY) the chain is Cytoplasmic. Residues 87–107 (FFLVQYLFWRIAYNLGIGLVL) traverse the membrane as a helical segment. At 108 to 187 (HYQSHYETLT…EINVWLIFRQ (80 aa)) the chain is on the lumenal side. Residues 188–208 (FVDLILMQDFVTYIIYVYLSI) form a helical membrane-spanning segment. Residues 209-212 (PYSW) lie on the Cytoplasmic side of the membrane. The helical transmembrane segment at 213-233 (VQIFNWRSLLGVILILFNIWV) threads the bilayer. Topologically, residues 234–258 (KLDAHRVVKDYAWYWGDFFFLEESE) are lumenal. A helical membrane pass occupies residues 259 to 279 (LIFDGVFNISPHPMYSIGYLG). Over 280 to 291 (YYGLSLICNDYK) the chain is Cytoplasmic. A helical membrane pass occupies residues 292–310 (VLLVSVFGHYSQFLFLKYV). Over 311 to 362 (ENPHIERTYGDGTDSDSQMNSRIDDLISKENYDYSRPLINMGLSFNNFNKLR) the chain is Lumenal. A helical membrane pass occupies residues 363 to 383 (FTDYFTIGTVAALMLGAIMNA). Over 384-389 (RFINLN) the chain is Cytoplasmic. The helical transmembrane segment at 390–410 (YLFITVFVTKLVSWLFISTIL) threads the bilayer. Residues 411–439 (YKQSQSKWFTRLFLENGYTQVYSYEQWQF) are Lumenal-facing. Residues 440–460 (IYNYYLVLTYTLMIIYTGLQI) traverse the membrane as a helical segment. The Cytoplasmic segment spans residues 461 to 463 (WSN). A helical membrane pass occupies residues 464–484 (FSNINNSQLIFGLILVALQTW). The Lumenal portion of the chain corresponds to 485–534 (CDKETRLAISDFGWFYGDFFLSNYISTRKLTSQGIYRYLNHPEAVLGVVG). A helical membrane pass occupies residues 535–555 (VWGTVLMTNFAVTNIILAVLW). Topologically, residues 556–869 (TLTNFILVKF…DIKQTLDSLA (314 aa)) are cytoplasmic.

Belongs to the class VI-like SAM-binding methyltransferase superfamily. CHO2 family.

It localises to the endoplasmic reticulum membrane. The enzyme catalyses a 1,2-diacyl-sn-glycero-3-phosphoethanolamine + S-adenosyl-L-methionine = a 1,2-diacyl-sn-glycero-3-phospho-N-methylethanolamine + S-adenosyl-L-homocysteine + H(+). Its pathway is phospholipid metabolism; phosphatidylcholine biosynthesis. Catalyzes the first step of the methylation pathway of phosphatidylcholine biosynthesis, the SAM-dependent methylation of phosphatidylethanolamine (PE) to phosphatidylmonomethylethanolamine (PMME). The protein is Phosphatidylethanolamine N-methyltransferase (CHO2) of Saccharomyces cerevisiae (strain YJM789) (Baker's yeast).